The primary structure comprises 220 residues: Protein GrpE (220 aa).

Positions 1-22 are disordered; that stretch reads MSDEKNKFTDASFENCDLKNPS.

It belongs to the GrpE family. As to quaternary structure, homodimer.

It localises to the cytoplasm. Functionally, participates actively in the response to hyperosmotic and heat shock by preventing the aggregation of stress-denatured proteins, in association with DnaK and GrpE. It is the nucleotide exchange factor for DnaK and may function as a thermosensor. Unfolded proteins bind initially to DnaJ; upon interaction with the DnaJ-bound protein, DnaK hydrolyzes its bound ATP, resulting in the formation of a stable complex. GrpE releases ADP from DnaK; ATP binding to DnaK triggers the release of the substrate protein, thus completing the reaction cycle. Several rounds of ATP-dependent interactions between DnaJ, DnaK and GrpE are required for fully efficient folding. The chain is Protein GrpE from Bartonella henselae (strain ATCC 49882 / DSM 28221 / CCUG 30454 / Houston 1) (Rochalimaea henselae).